The primary structure comprises 336 residues: MFARQVIRPARQLQQHVRRYASEAPQSGGSSNGALYVGIGAAGLAGAYIYMRGGKPAAPLSEEANKVAAKVGGASKKAFTGGDQGFISLLLDKSEVVNHNTKKLTFKLPEPDMESGLPVTSAVITKYKGPEMEKPVIRPYTPVSDVDQQGTVDFIVKKYEKGPMSSHMHNMEPGQRLDIKGPIPKYPWSPNKHEHIALIAGGTGITPMWQTARAIFKNPEDKTKVTLVFGNISEEDILLKKEWEHLENTYPQRFRAFYVLDNPPESWQGGKGFITKELLKTVLPEPKEGEKVKIFVCGPPGMYKAISGGKKSPSDQGELDGYLKELGYSKDQVYKF.

Residues 28-50 traverse the membrane as a helical segment; sequence GGSSNGALYVGIGAAGLAGAYIY. The FAD-binding FR-type domain maps to 84–189; sequence QGFISLLLDK…KGPIPKYPWS (106 aa). Residue 192 to 227 coordinates FAD; the sequence is KHEHIALIAGGTGITPMWQTARAIFKNPEDKTKVTL.

Belongs to the flavoprotein pyridine nucleotide cytochrome reductase family. Requires FAD as cofactor.

The protein resides in the mitochondrion outer membrane. It carries out the reaction 2 Fe(III)-[cytochrome b5] + NADH = 2 Fe(II)-[cytochrome b5] + NAD(+) + H(+). Its function is as follows. May mediate the reduction of outer membrane cytochrome b5. The polypeptide is NADH-cytochrome b5 reductase 2 (MCR1) (Phaeosphaeria nodorum (strain SN15 / ATCC MYA-4574 / FGSC 10173) (Glume blotch fungus)).